The primary structure comprises 306 residues: Tricarboxylate transporter FUM11 (306 aa).

Solcar repeat units lie at residues 18–98 (SDTL…YQKL), 109–195 (FGIL…LKQV), and 206–292 (IGTV…VVEG). A run of 6 helical transmembrane segments spans residues 24-44 (LVAGSVAGGLEIAITYPAEFA), 67-87 (GLQWYSGCIPFLIGNSVKTSI), 113-133 (LAGFGAGATESLLAVTPSERI), 170-189 (GFWPTTARQSAGSAIRLGSY), 209-229 (VKTFIIGSLAGLITVYLTQPL), and 267-286 (GAVARSLRLVMSGGIVFMVY).

It belongs to the mitochondrial carrier (TC 2.A.29) family.

The protein localises to the mitochondrion inner membrane. The protein operates within mycotoxin biosynthesis. Tricarboxylate transporter; part of the gene cluster that mediates the biosynthesis of fumonisins B1 (FB1), B2 (FB2), B3 (FB3), and B4 (FB4), which are carcinogenic mycotoxins. Within the pathway, FUM11 is involved the addition of the tricarballylic moieties to the carbon backbone. FUM11 makes a tricarboxylic acid precursor available for fumonisin biosynthesis via its export from the mitochondria. The biosynthesis starts with the FUM1-catalyzed carbon chain assembly from one molecule of acetyl-CoA, eight molecules of malonyl-CoA, and two molecules of methionine (in S-adenosyl form). The C18 polyketide chain is released from the enzyme by a nucleophilic attack of a carbanion, which is derived from R-carbon of alanine by decarboxylation, on the carbonyl carbon of polyketide acyl chain. This step is catalyzed by the pyridoxal 5'-phosphate-dependent aminoacyl transferase FUM8. The resultant 3-keto intermediate is then stereospecifically reduced to a 3-hydroxyl product by reductase FUM13. Subsequent oxidations at C-10 by the cytochrome P450 monooxygenase FUM2, C-14 and C-15 by FUM6, FUM12 or FUM15, tricarballylic esterification of the hydroxyl groups on C-14 and C-15 by acyltransferase FUM14, and C-5 hydroxylation by 2-keto-glutarate-dependent dioxygenase FUM3 furnish the biosynthesis of fumonisins. The tricarballylic moieties are most likely derived from the citric acid cycle, and their addition to the carbon backbone may involve FUM7, FUM10, FUM11 and FUM14. The chain is Tricarboxylate transporter FUM11 from Gibberella moniliformis (strain M3125 / FGSC 7600) (Maize ear and stalk rot fungus).